The chain runs to 643 residues: uncharacterized protein (643 aa).

Residues 179–199 (FKSSQLQQSPSPNKKSPSYSQ) show a composition bias toward low complexity. Disordered stretches follow at residues 179-200 (FKSS…YSQV) and 349-377 (KRSN…STEN).

This is an uncharacterized protein from Caenorhabditis elegans.